The following is a 283-amino-acid chain: Cardiolipin synthase (CMP-forming) (283 aa).

3 consecutive transmembrane segments (helical) span residues 83–103 (PFIGLFIITNNLTPALGLFAF), 155–175 (VSIAAIILGRDVLLAISALFI), and 209–229 (LSKWNTFFQMVYLGSGVLLLL).

This sequence belongs to the CDP-alcohol phosphatidyltransferase class-I family. In terms of assembly, may be found in a large complex. The cofactor is Mg(2+).

It is found in the mitochondrion inner membrane. It carries out the reaction a CDP-1,2-diacyl-sn-glycerol + a 1,2-diacyl-sn-glycero-3-phospho-(1'-sn-glycerol) = a cardiolipin + CMP + H(+). Its function is as follows. Catalyzes the synthesis of cardiolipin (CL) (diphosphatidylglycerol) by specifically transferring a phosphatidyl group from CDP-diacylglycerol to phosphatidylglycerol (PG). CL is a key phospholipid in mitochondrial membranes and plays important roles in maintaining the functional integrity and dynamics of mitochondria under both optimal and stress conditions. This Saccharomyces cerevisiae (strain ATCC 204508 / S288c) (Baker's yeast) protein is Cardiolipin synthase (CMP-forming) (CRD1).